The following is a 66-amino-acid chain: Cold shock-like protein CspD (66 aa).

In terms of domain architecture, CSD spans 4–63; it reads GKVKWFNSEKGFGFIEVEGGDDVFVHFSAIQGDGFKTLEEGQEVSFEIVEGNRGPQAANV.

As to quaternary structure, homodimer.

The protein localises to the cytoplasm. In Bacillus anthracis, this protein is Cold shock-like protein CspD (cspD).